Consider the following 390-residue polypeptide: Formate-dependent phosphoribosylglycinamide formyltransferase (390 aa).

N(1)-(5-phospho-beta-D-ribosyl)glycinamide-binding positions include 19–20 and Glu-79; that span reads EL. ATP-binding positions include Arg-111, Lys-152, 157 to 162, 192 to 195, and Glu-200; these read SSGKGQ and EGFV. The 190-residue stretch at 116 to 305 folds into the ATP-grasp domain; that stretch reads RLAAEELGLP…EFAIHARAIL (190 aa). Positions 264 and 276 each coordinate Mg(2+). N(1)-(5-phospho-beta-D-ribosyl)glycinamide-binding positions include Asp-283, Lys-353, and 360–361; that span reads RR.

It belongs to the PurK/PurT family. Homodimer.

The catalysed reaction is N(1)-(5-phospho-beta-D-ribosyl)glycinamide + formate + ATP = N(2)-formyl-N(1)-(5-phospho-beta-D-ribosyl)glycinamide + ADP + phosphate + H(+). It participates in purine metabolism; IMP biosynthesis via de novo pathway; N(2)-formyl-N(1)-(5-phospho-D-ribosyl)glycinamide from N(1)-(5-phospho-D-ribosyl)glycinamide (formate route): step 1/1. Its function is as follows. Involved in the de novo purine biosynthesis. Catalyzes the transfer of formate to 5-phospho-ribosyl-glycinamide (GAR), producing 5-phospho-ribosyl-N-formylglycinamide (FGAR). Formate is provided by PurU via hydrolysis of 10-formyl-tetrahydrofolate. The sequence is that of Formate-dependent phosphoribosylglycinamide formyltransferase from Marinobacter nauticus (strain ATCC 700491 / DSM 11845 / VT8) (Marinobacter aquaeolei).